Here is a 550-residue protein sequence, read N- to C-terminus: Arginine--tRNA ligase (550 aa).

Positions 130–140 (ANPTGPIHIGG) match the 'HIGH' region motif.

The protein belongs to the class-I aminoacyl-tRNA synthetase family. Monomer.

It localises to the cytoplasm. It catalyses the reaction tRNA(Arg) + L-arginine + ATP = L-arginyl-tRNA(Arg) + AMP + diphosphate. This Mycolicibacterium smegmatis (strain ATCC 700084 / mc(2)155) (Mycobacterium smegmatis) protein is Arginine--tRNA ligase (argS).